The chain runs to 352 residues: MTITTLSRQNIQALTPYQSARKLGGNGTIWLNANEYPTSPKFQLSGKDLNRYPEPQPQRVVQAYANYAGVSTENVLVTRGGDEGIELIIHTFCEPKQDAILFCPPTYGMYAVSAETAGVLSKTVPLTDDFQLNLPEIKNHLNDVKVVFVCSPNNPTGNLLKQSDILDLLQITAGKAIVVVDEAYIEFCPEASVINLLKNYPHLAIIRTLSKAFALAGLRCGFVLANPELIDILSKVIAPYPIPVPSADLAEQALRPANIATVQALTQELLSNRQWLAKALLVLHQVEKVYESEANYLLIKCQNGQAVFKALWEQGIILRDQNKTLHLQNCIRITVGTRNECEKVVEAIKEVK.

Lys211 is modified (N6-(pyridoxal phosphate)lysine).

This sequence belongs to the class-II pyridoxal-phosphate-dependent aminotransferase family. Histidinol-phosphate aminotransferase subfamily. In terms of assembly, homodimer. The cofactor is pyridoxal 5'-phosphate.

The enzyme catalyses L-histidinol phosphate + 2-oxoglutarate = 3-(imidazol-4-yl)-2-oxopropyl phosphate + L-glutamate. It participates in amino-acid biosynthesis; L-histidine biosynthesis; L-histidine from 5-phospho-alpha-D-ribose 1-diphosphate: step 7/9. The polypeptide is Histidinol-phosphate aminotransferase (Haemophilus influenzae (strain PittEE)).